Consider the following 129-residue polypeptide: Gem-associated protein 7 (129 aa).

An N-acetylmethionine modification is found at Met1. An SUZ-C domain is found at 1–31 (MQSPLTIPVPVPVLRLPRGPDGFSRGFASDG). The Sm domain occupies 63-129 (RYLRSLLAMV…SDIISYSFKL (67 aa)).

Belongs to the gemin-7 family. Part of the core SMN complex that contains SMN1, GEMIN2/SIP1, DDX20/GEMIN3, GEMIN4, GEMIN5, GEMIN6, GEMIN7, GEMIN8 and STRAP/UNRIP. Part of the SMN-Sm complex that contains SMN1, GEMIN2/SIP1, DDX20/GEMIN3, GEMIN4, GEMIN5, GEMIN6, GEMIN7, GEMIN8, STRAP/UNRIP and the Sm proteins SNRPB, SNRPD1, SNRPD2, SNRPD3, SNRPE, SNRPF and SNRPG. Interacts with GEMIN6; the interaction is direct. Interacts with STRAP/UNRIP; the interaction is direct. Interacts with GEMIN8; the interaction is direct. Interacts with SNRPB, SNRPD2, SNRPD3 and SNRPE; the interaction is direct.

It is found in the nucleus. The protein resides in the nucleoplasm. It localises to the gem. The protein localises to the cytoplasm. The SMN complex catalyzes the assembly of small nuclear ribonucleoproteins (snRNPs), the building blocks of the spliceosome, and thereby plays an important role in the splicing of cellular pre-mRNAs. Most spliceosomal snRNPs contain a common set of Sm proteins SNRPB, SNRPD1, SNRPD2, SNRPD3, SNRPE, SNRPF and SNRPG that assemble in a heptameric protein ring on the Sm site of the small nuclear RNA to form the core snRNP (Sm core). In the cytosol, the Sm proteins SNRPD1, SNRPD2, SNRPE, SNRPF and SNRPG are trapped in an inactive 6S pICln-Sm complex by the chaperone CLNS1A that controls the assembly of the core snRNP. To assemble core snRNPs, the SMN complex accepts the trapped 5Sm proteins from CLNS1A forming an intermediate. Binding of snRNA inside 5Sm triggers eviction of the SMN complex, thereby allowing binding of SNRPD3 and SNRPB to complete assembly of the core snRNP. The protein is Gem-associated protein 7 (Gemin7) of Mus musculus (Mouse).